The sequence spans 217 residues: UPF0323 lipoprotein HPSH_01205 (217 aa).

The signal sequence occupies residues 1–27 (MKKPYRKISDYAIVGGLSALVMVSIVG). The N-palmitoyl cysteine moiety is linked to residue cysteine 28. Cysteine 28 carries S-diacylglycerol cysteine lipidation. A compositionally biased stretch (polar residues) spans 160–171 (QRTYKSPQAYQR). Positions 160 to 217 (QRTYKSPQAYQRSQNSFSKSAPSASSMGGASKGQSGFFGSSRPTSSPAVSSGTRGFNS) are disordered. The span at 172–210 (SQNSFSKSAPSASSMGGASKGQSGFFGSSRPTSSPAVSS) shows a compositional bias: low complexity.

This sequence belongs to the UPF0323 family.

Its subcellular location is the cell membrane. This is UPF0323 lipoprotein HPSH_01205 from Helicobacter pylori (strain Shi470).